Here is a 296-residue protein sequence, read N- to C-terminus: METAGDKKWSAEEPKEEVELQMSSQPSTAPAKAKATGKKQKKSETDNGCKPKEGKPQDTETPGQTRRKVPIPPIPEYLPPVNLIHRDVLRAWCQKKRVSSKGQKLDAYKRLLARAFPEQMLELRNVPDSAKDARLKTAHKKMKTEPGEESEVTVPLEMVPVPEEQIPALIDPPMLYEEVSTTVVTTPATEAVLASWARIASNAKKYEAVPADASSSSEVKGEMWCVVHGTSLPGNSRGWVRLQFHAGQAWVPDKKGKAIALFLLPACTFPPPHLEDNMLCPKCVHKNKILTKSLEG.

Over residues 1–13 the composition is skewed to basic and acidic residues; the sequence is METAGDKKWSAEE. Residues 1–73 form a disordered region; sequence METAGDKKWS…QTRRKVPIPP (73 aa). The span at 23-34 shows a compositional bias: low complexity; it reads SSQPSTAPAKAK. The span at 42–58 shows a compositional bias: basic and acidic residues; the sequence is KSETDNGCKPKEGKPQD.

Interacts with DPPA2. Interacts with PCGF1. Expressed in pluripotent embryonic cells, but not in differentiated somatic tissues.

It localises to the nucleus. Its function is as follows. May be involved in the maintenance of active epigenetic status of target genes. May inhibit differentiation of embryonic stem (ES) cells into a primitive ectoderm lineage. The protein is Developmental pluripotency-associated protein 4 (Dppa4) of Mus musculus (Mouse).